The primary structure comprises 312 residues: Regulation of nuclear pre-mRNA domain-containing protein 1A (312 aa).

S2 bears the N-acetylserine mark. Residues 2 to 133 form the CID domain; sequence SAFSEAALEK…QLKQALYGDK (132 aa). S153, S156, and S285 each carry phosphoserine. Residues 244–286 adopt a coiled-coil conformation; the sequence is LADFLRCQKEALAEKEHKLEEYKRKLARVSLVRKELRSRIQSL.

Belongs to the UPF0400 (RTT103) family. As to quaternary structure, may form a heterodimer with RPRD1B. Associates with the RNA polymerase II subunit POLR2A (via CTD phosphorylated at 'Ser-2' and 'Ser-7' of the heptad repeats).

Its subcellular location is the nucleus. Functionally, interacts with phosphorylated C-terminal heptapeptide repeat domain (CTD) of the largest RNA polymerase II subunit POLR2A, and participates in dephosphorylation of the CTD by RPAP2. May act as a negative regulator of cyclin-D1 (CCND1) and cyclin-E (CCNE1) in the cell cycle. This is Regulation of nuclear pre-mRNA domain-containing protein 1A (RPRD1A) from Pongo abelii (Sumatran orangutan).